Here is a 130-residue protein sequence, read N- to C-terminus: Cysteine methyltransferase (130 aa).

The catalysed reaction is [trehalose-6-phosphate synthase]-L-cysteine + S-adenosyl-L-methionine = [trehalose-6-phosphate synthase]-S-methyl-L-cysteine + S-adenosyl-L-homocysteine + H(+). In terms of biological role, S-adenosyl-L-methionine-dependent protein-cysteine S-methyltransferase with broad substrate specificity. Methylates trehalose-6-phosphate synthase (TPS), enhancing its enzymatic activity and promoting trehalose synthesis upon entry of cells into stationary phase. This chain is Cysteine methyltransferase, found in Saccharomyces cerevisiae (Baker's yeast).